A 259-amino-acid chain; its full sequence is Pro-opiomelanocortin (259 aa).

Positions 1–22 (MLRSVWVYSLGLAVLLQQSGRE) are cleaved as a signal peptide. A Pyrrolidone carboxylic acid modification is found at glutamine 23. Disulfide bonds link cysteine 24-cysteine 46 and cysteine 30-cysteine 42. The interval 113-142 (PQAEEEMEESESSQQQRREDKRSYSMEHFR) is disordered. The span at 128 to 142 (QRREDKRSYSMEHFR) shows a compositional bias: basic and acidic residues. Valine amide is present on valine 147.

The protein belongs to the POMC family. In terms of processing, specific enzymatic cleavages at paired basic residues yield the different active peptides.

It localises to the secreted. Its function is as follows. Stimulates the adrenal glands to release cortisol. Functionally, anorexigenic peptide. Increases the pigmentation of skin by increasing melanin production in melanocytes. Increases the pigmentation of skin by increasing melanin production in melanocytes. In terms of biological role, endogenous orexigenic opiate. Its function is as follows. Endogenous opiate. This chain is Pro-opiomelanocortin (pomc), found in Lepisosteus osseus (Long-nosed gar).